The following is a 186-amino-acid chain: Serine hydrolase RBBP9 (186 aa).

A retinoblastoma protein binding region spans residues 56 to 70 (LPFMETELHCDEKTI). Residues 63–67 (LHCDE) form an involved in binding to RB1 region. Active-site charge relay system residues include Ser-75, Asp-138, and His-165.

Belongs to the RBBP9 family. As to quaternary structure, interacts with RB1; the interaction disrupts RB1 binding to E2F1. Interacts with RBL1 and RBL2. As to expression, expressed in spleen.

The enzyme catalyses valacyclovir + H2O = acyclovir + L-valine + H(+). In terms of biological role, serine hydrolase. Catalyzes the hydrolytic activation of amino acid ester of the antiviral prodrug valacyclovir to its corresponding active drug, acyclovir. May negatively regulate basal or autocrine TGF-beta signaling by suppressing SMAD2-SMAD3 phosphorylation. May play a role in the transformation process due to its capacity to confer resistance to the growth-inhibitory effects of TGF-beta through interaction with RB1 and the subsequent displacement of E2F1. In Mus musculus (Mouse), this protein is Serine hydrolase RBBP9 (Rbbp9).